We begin with the raw amino-acid sequence, 55 residues long: Large ribosomal subunit protein bL32 (55 aa).

The tract at residues 1–28 is disordered; the sequence is MAVQQNKPTRSKRGMRRSHDALTTATLS.

Belongs to the bacterial ribosomal protein bL32 family.

The chain is Large ribosomal subunit protein bL32 from Serratia proteamaculans (strain 568).